A 676-amino-acid chain; its full sequence is DNA-directed RNA polymerase subunit beta' (676 aa).

4 residues coordinate Zn(2+): Cys69, Cys71, Cys87, and Cys90. Positions 489, 491, and 493 each coordinate Mg(2+).

This sequence belongs to the RNA polymerase beta' chain family. RpoC1 subfamily. In terms of assembly, in plastids the minimal PEP RNA polymerase catalytic core is composed of four subunits: alpha, beta, beta', and beta''. When a (nuclear-encoded) sigma factor is associated with the core the holoenzyme is formed, which can initiate transcription. Requires Mg(2+) as cofactor. Zn(2+) serves as cofactor.

Its subcellular location is the plastid. The protein resides in the chloroplast. The enzyme catalyses RNA(n) + a ribonucleoside 5'-triphosphate = RNA(n+1) + diphosphate. Its function is as follows. DNA-dependent RNA polymerase catalyzes the transcription of DNA into RNA using the four ribonucleoside triphosphates as substrates. The sequence is that of DNA-directed RNA polymerase subunit beta' from Lolium perenne (Perennial ryegrass).